The sequence spans 167 residues: Putative ripening-related protein 6 (167 aa).

An N-terminal signal peptide occupies residues 1 to 23 (MANAKQLALFAMLVLLLASCAAA). Positions 28–57 (KPDPCDGGGGGVDSHLPPGMRRCSSPAVSE) are disordered.

Belongs to the kiwellin family.

It localises to the secreted. The sequence is that of Putative ripening-related protein 6 from Oryza sativa subsp. japonica (Rice).